The sequence spans 829 residues: Protein SEY1 homolog 2 (829 aa).

Positions 1–21 (MDEVSPTKHFTSKPLLPTKTP) are disordered. Residues 1-728 (MDEVSPTKHF…EKENSEIKYQ (728 aa)) are Cytoplasmic-facing. The 223-residue stretch at 83 to 305 (GMDYNAVGIL…FLPQYNKEIP (223 aa)) folds into the GB1/RHD3-type G domain. Residue 93 to 100 (GAQSSGKS) coordinates GTP. Coiled coils occupy residues 372–396 (KKIM…YMES) and 576–596 (DTIE…IKEL). Residues 729–749 (IPLYLIVLVIFFGFDEFIAIL) form a helical membrane-spanning segment. Over 750–752 (TNP) the chain is Lumenal. The chain crosses the membrane as a helical span at residues 753–773 (LLFILTLIIGGGIYIGYKLNL). The Cytoplasmic portion of the chain corresponds to 774–829 (GGVAKNYIQYLLSMSLSSTMEYLRTIPFFTPLIDKIWPKDDNKDDDSTEETQEETK).

It belongs to the TRAFAC class dynamin-like GTPase superfamily. GB1/RHD3 GTPase family. RHD3 subfamily.

It localises to the endoplasmic reticulum membrane. Functionally, probable GTP-binding protein that may be involved in cell development. The sequence is that of Protein SEY1 homolog 2 from Entamoeba dispar (strain ATCC PRA-260 / SAW760).